Here is a 447-residue protein sequence, read N- to C-terminus: Selenide, water dikinase 3 (447 aa).

Residue Sec-50 is part of the active site. A non-standard amino acid (selenocysteine) is located at residue Sec-50. Residues Lys-53, 103–105 (GMD), Asp-123, Asp-146, and 197–200 (GGQT) contribute to the ATP site. Residue Asp-105 coordinates Mg(2+). Asp-146 lines the Mg(2+) pocket. Asp-301 is a binding site for Mg(2+).

It belongs to the selenophosphate synthase 1 family. In terms of assembly, homodimer. Mg(2+) serves as cofactor. In the embryo, expressed in retina, olfactory vesicles, tectum, pronephros ducts and myotomes at 24 hours post-fertilization and in retina, tectum, liver and intestinal bulb 3 days after fertilization.

The enzyme catalyses hydrogenselenide + ATP + H2O = selenophosphate + AMP + phosphate + 2 H(+). Synthesizes selenophosphate from selenide and ATP. The protein is Selenide, water dikinase 3 of Danio rerio (Zebrafish).